Consider the following 129-residue polypeptide: UPF0146 protein VNG_2609C (129 aa).

The protein belongs to the UPF0146 family.

This chain is UPF0146 protein VNG_2609C, found in Halobacterium salinarum (strain ATCC 700922 / JCM 11081 / NRC-1) (Halobacterium halobium).